Consider the following 113-residue polypeptide: Small ribosomal subunit protein uS17 (113 aa).

This sequence belongs to the universal ribosomal protein uS17 family. In terms of assembly, part of the 30S ribosomal subunit.

One of the primary rRNA binding proteins, it binds specifically to the 5'-end of 16S ribosomal RNA. The protein is Small ribosomal subunit protein uS17 of Nanoarchaeum equitans (strain Kin4-M).